A 476-amino-acid polypeptide reads, in one-letter code: UDP-N-acetylmuramate--L-alanine ligase (476 aa).

115–121 (GTHGKTT) is a binding site for ATP.

This sequence belongs to the MurCDEF family.

The protein resides in the cytoplasm. It catalyses the reaction UDP-N-acetyl-alpha-D-muramate + L-alanine + ATP = UDP-N-acetyl-alpha-D-muramoyl-L-alanine + ADP + phosphate + H(+). It participates in cell wall biogenesis; peptidoglycan biosynthesis. Functionally, cell wall formation. The sequence is that of UDP-N-acetylmuramate--L-alanine ligase from Paramagnetospirillum magneticum (strain ATCC 700264 / AMB-1) (Magnetospirillum magneticum).